The primary structure comprises 92 residues: Small ribosomal subunit protein uS19c (92 aa).

This sequence belongs to the universal ribosomal protein uS19 family.

The protein resides in the plastid. It is found in the chloroplast. Protein S19 forms a complex with S13 that binds strongly to the 16S ribosomal RNA. This Rhodomonas salina (Cryptomonas salina) protein is Small ribosomal subunit protein uS19c.